The chain runs to 85 residues: Small ribosomal subunit protein bS18 (85 aa).

Belongs to the bacterial ribosomal protein bS18 family. Part of the 30S ribosomal subunit. Forms a tight heterodimer with protein bS6.

Its function is as follows. Binds as a heterodimer with protein bS6 to the central domain of the 16S rRNA, where it helps stabilize the platform of the 30S subunit. The protein is Small ribosomal subunit protein bS18 of Helicobacter acinonychis (strain Sheeba).